Consider the following 229-residue polypeptide: Enolase-phosphatase E1 (229 aa).

It belongs to the HAD-like hydrolase superfamily. MasA/MtnC family. As to quaternary structure, monomer. Mg(2+) serves as cofactor.

The catalysed reaction is 5-methylsulfanyl-2,3-dioxopentyl phosphate + H2O = 1,2-dihydroxy-5-(methylsulfanyl)pent-1-en-3-one + phosphate. It functions in the pathway amino-acid biosynthesis; L-methionine biosynthesis via salvage pathway; L-methionine from S-methyl-5-thio-alpha-D-ribose 1-phosphate: step 3/6. It participates in amino-acid biosynthesis; L-methionine biosynthesis via salvage pathway; L-methionine from S-methyl-5-thio-alpha-D-ribose 1-phosphate: step 4/6. In terms of biological role, bifunctional enzyme that catalyzes the enolization of 2,3-diketo-5-methylthiopentyl-1-phosphate (DK-MTP-1-P) into the intermediate 2-hydroxy-3-keto-5-methylthiopentenyl-1-phosphate (HK-MTPenyl-1-P), which is then dephosphorylated to form the acireductone 1,2-dihydroxy-3-keto-5-methylthiopentene (DHK-MTPene). This chain is Enolase-phosphatase E1, found in Erwinia tasmaniensis (strain DSM 17950 / CFBP 7177 / CIP 109463 / NCPPB 4357 / Et1/99).